The primary structure comprises 475 residues: E3 ubiquitin-protein ligase TRIM62 (475 aa).

The segment at 11 to 54 (CSICLSIYQDPVSLGCEHYFCRRCITEHWVRQEAQGARDCPECR) adopts an RING-type zinc-finger fold. The segment at 88-128 (RAARPCQAHDKVKLFCLTDRALLCFFCDEPALHEQHQVTGI) adopts a B box-type zinc-finger fold. Zn(2+) contacts are provided by Cys93, His96, Cys114, and His120. Residues 127 to 241 (GIDDAFDELQ…LQERLAETDR (115 aa)) are a coiled coil. Residues 277–475 (PLQYTIWKSL…QPLRINTVRI (199 aa)) form the B30.2/SPRY domain.

Belongs to the TRIM/RBCC family. Interacts with the ubiquitin-conjugating enzyme, UBE2D2. Post-translationally, polyubiquitinated, autoubiquitinated in the presence of UBE2D2.

The protein resides in the cytoplasm. It carries out the reaction S-ubiquitinyl-[E2 ubiquitin-conjugating enzyme]-L-cysteine + [acceptor protein]-L-lysine = [E2 ubiquitin-conjugating enzyme]-L-cysteine + N(6)-ubiquitinyl-[acceptor protein]-L-lysine.. Its pathway is protein modification; protein ubiquitination. Functionally, E3 ubiquitin ligase that plays a role in antifungal immunity by mediating 'Lys-27'-linked ubiquitination of CARD9 downstream of C-type lectin receptors; leading to CARD9 activation, followed by activation of NF-kappa-B and MAP kinase p38 pathways. E3 ubiquitin ligase activity is dependent on E2 ubiquitin-conjugating enzyme UBE2D2. In Homo sapiens (Human), this protein is E3 ubiquitin-protein ligase TRIM62.